The sequence spans 188 residues: PRA1 family protein F4 (188 aa).

Polar residues predominate over residues 1–13 (MANNDEITTSSHA). The disordered stretch occupies residues 1–25 (MANNDEITTSSHASPAVNHESISRA). Helical transmembrane passes span 67–86 (YFRS…SLIW), 90–107 (SLIV…LYFL), 119–139 (IDDR…LLLT), and 142–162 (TFNI…HAVI).

The protein belongs to the PRA1 family.

The protein localises to the endosome membrane. Its function is as follows. May be involved in both secretory and endocytic intracellular trafficking in the endosomal/prevacuolar compartments. The protein is PRA1 family protein F4 (PRA1F4) of Arabidopsis thaliana (Mouse-ear cress).